The chain runs to 388 residues: Probable protein phosphatase 2C 43 (388 aa).

The region spanning 53–352 (EFSFAVVQAN…DDITVVVVFI (300 aa)) is the PPM-type phosphatase domain. 4 residues coordinate Mn(2+): Asp84, Gly85, Asp284, and Asp343.

This sequence belongs to the PP2C family. It depends on Mg(2+) as a cofactor. Mn(2+) serves as cofactor.

The catalysed reaction is O-phospho-L-seryl-[protein] + H2O = L-seryl-[protein] + phosphate. The enzyme catalyses O-phospho-L-threonyl-[protein] + H2O = L-threonyl-[protein] + phosphate. The protein is Probable protein phosphatase 2C 43 of Oryza sativa subsp. japonica (Rice).